Reading from the N-terminus, the 145-residue chain is D-aminoacyl-tRNA deacylase (145 aa).

Residues 137–138 carry the Gly-cisPro motif, important for rejection of L-amino acids motif; the sequence is GP.

The protein belongs to the DTD family. As to quaternary structure, homodimer.

It is found in the cytoplasm. The enzyme catalyses glycyl-tRNA(Ala) + H2O = tRNA(Ala) + glycine + H(+). It carries out the reaction a D-aminoacyl-tRNA + H2O = a tRNA + a D-alpha-amino acid + H(+). Functionally, an aminoacyl-tRNA editing enzyme that deacylates mischarged D-aminoacyl-tRNAs. Also deacylates mischarged glycyl-tRNA(Ala), protecting cells against glycine mischarging by AlaRS. Acts via tRNA-based rather than protein-based catalysis; rejects L-amino acids rather than detecting D-amino acids in the active site. By recycling D-aminoacyl-tRNA to D-amino acids and free tRNA molecules, this enzyme counteracts the toxicity associated with the formation of D-aminoacyl-tRNA entities in vivo and helps enforce protein L-homochirality. In Pseudomonas entomophila (strain L48), this protein is D-aminoacyl-tRNA deacylase.